The chain runs to 195 residues: Protein GrpE (195 aa).

Residues 1–20 (MSSKEQKTPDEQVLDQKEAA) are compositionally biased toward basic and acidic residues. The segment at 1–40 (MSSKEQKTPDEQVLDQKEAAKGQQADAAPETADVADPRDA) is disordered.

Belongs to the GrpE family. Homodimer.

The protein localises to the cytoplasm. In terms of biological role, participates actively in the response to hyperosmotic and heat shock by preventing the aggregation of stress-denatured proteins, in association with DnaK and GrpE. It is the nucleotide exchange factor for DnaK and may function as a thermosensor. Unfolded proteins bind initially to DnaJ; upon interaction with the DnaJ-bound protein, DnaK hydrolyzes its bound ATP, resulting in the formation of a stable complex. GrpE releases ADP from DnaK; ATP binding to DnaK triggers the release of the substrate protein, thus completing the reaction cycle. Several rounds of ATP-dependent interactions between DnaJ, DnaK and GrpE are required for fully efficient folding. This Pectobacterium carotovorum subsp. carotovorum (strain PC1) protein is Protein GrpE.